The sequence spans 209 residues: Protein GrpE (209 aa).

2 stretches are compositionally biased toward basic and acidic residues: residues 1–16 (MKKS…KEES) and 34–44 (KAGEKTAEPEK). The disordered stretch occupies residues 1 to 61 (MKKSTKKEST…EKSPEAACRE (61 aa)).

The protein belongs to the GrpE family. As to quaternary structure, homodimer.

The protein localises to the cytoplasm. Its function is as follows. Participates actively in the response to hyperosmotic and heat shock by preventing the aggregation of stress-denatured proteins, in association with DnaK and GrpE. It is the nucleotide exchange factor for DnaK and may function as a thermosensor. Unfolded proteins bind initially to DnaJ; upon interaction with the DnaJ-bound protein, DnaK hydrolyzes its bound ATP, resulting in the formation of a stable complex. GrpE releases ADP from DnaK; ATP binding to DnaK triggers the release of the substrate protein, thus completing the reaction cycle. Several rounds of ATP-dependent interactions between DnaJ, DnaK and GrpE are required for fully efficient folding. This chain is Protein GrpE, found in Methanosarcina acetivorans (strain ATCC 35395 / DSM 2834 / JCM 12185 / C2A).